The chain runs to 363 residues: uncharacterized protein (363 aa).

29 to 36 provides a ligand contact to ATP; the sequence is GSINSGKT.

This sequence belongs to the archaeal ATPase family.

This is an uncharacterized protein from Methanocaldococcus jannaschii (strain ATCC 43067 / DSM 2661 / JAL-1 / JCM 10045 / NBRC 100440) (Methanococcus jannaschii).